The following is a 746-amino-acid chain: Rhizobactin receptor (746 aa).

Positions 1–26 (MGNNENGGISFCVFVVVIGFGTGAVA) are cleaved as a signal peptide. A TonB box motif is present at residues 40 to 47 (EEIVVTGG). The TBDR plug domain maps to 52–163 (QISEIARTIY…TGGIINIITK (112 aa)). Residues 169–746 (EPGLHAEVTG…TFAVSLTKVF (578 aa)) enclose the TBDR beta-barrel domain. Residues 729–746 (FDYKGRGRTFAVSLTKVF) carry the TonB C-terminal box motif.

This sequence belongs to the TonB-dependent receptor family.

Its subcellular location is the cell outer membrane. Receptor for the siderophore rhizobactin. This is Rhizobactin receptor (rhtA) from Rhizobium meliloti (strain 1021) (Ensifer meliloti).